Consider the following 197-residue polypeptide: MSLGRLCRLLKPALLCGALAAPGLAGTMCASRDDWRCARSMHEFSAKDIDGHMVNLDKYRGFVCIVTNVASQUGKTEVNYTQLVDLHARYAECGLRILAFPCNQFGKQEPGSNEEIKEFAAGYNVKFDMFSKICVNGDDAHPLWKWMKIQPKGKGILGNAIKWNFTKFLIDKNGCVVKRYGPMEEPLVIEKDLPHYF.

A Phosphoserine modification is found at S40. The active site involves U73. A non-standard amino acid (selenocysteine) is located at residue U73.

The protein belongs to the glutathione peroxidase family. Monomer. Has a tendency to form higher mass oligomers. Interacts with FUNDC1; this interaction promotes GPX4 recruitment into mitochondria through TOM/TIM complex where it is degraded by mitophagy.

It is found in the mitochondrion. It localises to the cytoplasm. The catalysed reaction is a hydroperoxy polyunsaturated fatty acid + 2 glutathione = a hydroxy polyunsaturated fatty acid + glutathione disulfide + H2O. It catalyses the reaction 2 glutathione + H2O2 = glutathione disulfide + 2 H2O. It carries out the reaction tert-butyl hydroperoxide + 2 glutathione = tert-butanol + glutathione disulfide + H2O. The enzyme catalyses cumene hydroperoxide + 2 glutathione = 2-phenylpropan-2-ol + glutathione disulfide + H2O. The catalysed reaction is (9S)-hydroperoxy-(10E,12Z)-octadecadienoate + 2 glutathione = (9S)-hydroxy-(10E,12Z)-octadecadienoate + glutathione disulfide + H2O. It catalyses the reaction (13S)-hydroperoxy-(9Z,11E)-octadecadienoate + 2 glutathione = (13S)-hydroxy-(9Z,11E)-octadecadienoate + glutathione disulfide + H2O. It carries out the reaction (5S)-hydroperoxy-(6E,8Z,11Z,14Z)-eicosatetraenoate + 2 glutathione = (5S)-hydroxy-(6E,8Z,11Z,14Z)-eicosatetraenoate + glutathione disulfide + H2O. The enzyme catalyses (12R)-hydroperoxy-(5Z,8Z,10E,14Z)-eicosatetraenoate + 2 glutathione = (12R)-hydroxy-(5Z,8Z,10E,14Z)-eicosatetraenoate + glutathione disulfide + H2O. The catalysed reaction is (12S)-hydroperoxy-(5Z,8Z,10E,14Z)-eicosatetraenoate + 2 glutathione = (12S)-hydroxy-(5Z,8Z,10E,14Z)-eicosatetraenoate + glutathione disulfide + H2O. It catalyses the reaction (15S)-hydroperoxy-(5Z,8Z,11Z,13E)-eicosatetraenoate + 2 glutathione = (15S)-hydroxy-(5Z,8Z,11Z,13E)-eicosatetraenoate + glutathione disulfide + H2O. It carries out the reaction (5S)-hydroperoxy-(6E,8Z,11Z,14Z,17Z)-eicosapentaenoate + 2 glutathione = (5S)-hydroxy-(6E,8Z,11Z,14Z,17Z)-eicosapentaenoate + glutathione disulfide + H2O. The enzyme catalyses (12S)-hydroperoxy-(5Z,8Z,10E,14Z,17Z)-eicosapentaenoate + 2 glutathione = (12S)-hydroxy-(5Z,8Z,10E,14Z,17Z)-eicosapentaenoate + glutathione disulfide + H2O. The catalysed reaction is (15S)-hydroperoxy-(5Z,8Z,11Z,13E,17Z)-eicosapentaenoate + 2 glutathione = (15S)-hydroxy-(5Z,8Z,11Z,13E,17Z)-eicosapentaenoate + glutathione disulfide + H2O. It catalyses the reaction (15S)-hydroperoxy-(11Z,13E)-eicosadienoate + 2 glutathione = (15S)-hydroxy-(11Z,13E)-eicosadienoate + glutathione disulfide + H2O. It carries out the reaction (17S)-hydroperoxy-(4Z,7Z,10Z,13Z,15E,19Z)-docosahexaenoate + 2 glutathione = (17S)-hydroxy-(4Z,7Z,10Z,13Z,15E,19Z)-docosahexaenoate + glutathione disulfide + H2O. The enzyme catalyses a hydroperoxy-1,2-diacyl-glycero-3-phosphocholine + 2 glutathione = a hydroxy-1,2-diacyl-glycero-3-phosphocholine + glutathione disulfide + H2O. Essential antioxidant peroxidase that directly reduces phospholipid hydroperoxide even if they are incorporated in membranes and lipoproteins. Can also reduce fatty acid hydroperoxide, cholesterol hydroperoxide and thymine hydroperoxide. Plays a key role in protecting cells from oxidative damage by preventing membrane lipid peroxidation. Required to prevent cells from ferroptosis, a non-apoptotic cell death resulting from an iron-dependent accumulation of lipid reactive oxygen species. The presence of selenocysteine (Sec) versus Cys at the active site is essential for life: it provides resistance to overoxidation and prevents cells against ferroptosis. The presence of Sec at the active site is also essential for the survival of a specific type of parvalbumin-positive interneurons, thereby preventing against fatal epileptic seizures. May be required to protect cells from the toxicity of ingested lipid hydroperoxides. Required for normal sperm development and male fertility. Essential for maturation and survival of photoreceptor cells. Plays a role in a primary T-cell response to viral and parasitic infection by protecting T-cells from ferroptosis and by supporting T-cell expansion. Plays a role of glutathione peroxidase in platelets in the arachidonic acid metabolism. Reduces hydroperoxy ester lipids formed by a 15-lipoxygenase that may play a role as down-regulator of the cellular 15-lipoxygenase pathway. Can also reduce small soluble hydroperoxides such as H2O2, cumene hydroperoxide and tert-butyl hydroperoxide. The polypeptide is Phospholipid hydroperoxide glutathione peroxidase (Pongo pygmaeus (Bornean orangutan)).